We begin with the raw amino-acid sequence, 520 residues long: GMP synthase [glutamine-hydrolyzing] (520 aa).

Positions 3-200 (AIAIIDFGSQ…FLDIANCKRD (198 aa)) constitute a Glutamine amidotransferase type-1 domain. Catalysis depends on C84, which acts as the Nucleophile. Catalysis depends on residues H175 and E177. The GMPS ATP-PPase domain maps to 201–386 (WTMKSFIEEQ…IGLSDEIIFQ (186 aa)). 228–234 (SGGVDSS) is a binding site for ATP.

As to quaternary structure, homodimer.

It catalyses the reaction XMP + L-glutamine + ATP + H2O = GMP + L-glutamate + AMP + diphosphate + 2 H(+). It participates in purine metabolism; GMP biosynthesis; GMP from XMP (L-Gln route): step 1/1. Its function is as follows. Catalyzes the synthesis of GMP from XMP. The polypeptide is GMP synthase [glutamine-hydrolyzing] (Wolbachia pipientis wMel).